The sequence spans 419 residues: UDP-N-acetylglucosamine 1-carboxyvinyltransferase (419 aa).

22-23 (KN) contributes to the phosphoenolpyruvate binding site. R92 is a binding site for UDP-N-acetyl-alpha-D-glucosamine. C116 functions as the Proton donor in the catalytic mechanism. C116 carries the 2-(S-cysteinyl)pyruvic acid O-phosphothioketal modification. UDP-N-acetyl-alpha-D-glucosamine contacts are provided by residues 121-125 (RPVDQ), D306, and I328.

This sequence belongs to the EPSP synthase family. MurA subfamily.

The protein resides in the cytoplasm. The catalysed reaction is phosphoenolpyruvate + UDP-N-acetyl-alpha-D-glucosamine = UDP-N-acetyl-3-O-(1-carboxyvinyl)-alpha-D-glucosamine + phosphate. It functions in the pathway cell wall biogenesis; peptidoglycan biosynthesis. In terms of biological role, cell wall formation. Adds enolpyruvyl to UDP-N-acetylglucosamine. Target for the antibiotic phosphomycin. In Acinetobacter guillouiae (Acinetobacter genomosp. 11), this protein is UDP-N-acetylglucosamine 1-carboxyvinyltransferase.